The chain runs to 486 residues: E3 ubiquitin-protein ligase RNF8 (486 aa).

Residues 38–92 (VTVGRGFGVTYQLVSKICPLMISRNHCVLKQNPEGQWTIMDNKSLNGVWLNRARL) form the FHA domain. A required for interaction with PIWIL1 region spans residues 68–72 (QNPEG). Ser157 carries the phosphoserine modification. Over residues 180–201 (SCESGQSVKSQGKGEVSSTPSE) the composition is skewed to polar residues. The tract at residues 180–207 (SCESGQSVKSQGKGEVSSTPSENLDPKL) is disordered. The RING-type zinc finger occupies 404-442 (CIICSEYFIEAVTLNCAHSFCSYCINEWMKRKIECPICR).

It belongs to the RNF8 family. Homodimer. Forms a E2-E3 ubiquitin ligase complex composed of the RNF8 homodimer and a E2 heterodimer of UBE2N and UBE2V2. Interacts with class III E2s, including UBE2E1, UBE2E2, and UBE2E3 and with UBE2N. Interacts with RXRA. Interacts (via FHA domain) with phosphorylated HERC2 (via C-terminus). Interacts with PIWIL1; leading to sequester RNF8 in the cytoplasm. Interacts with WRAP53/TCAB1. Autoubiquitinated through 'Lys-48' and 'Lys-63' of ubiquitin. 'Lys-63' polyubiquitination is mediated by UBE2N. 'Lys-29'-type polyubiquitination is also observed, but it doesn't require its own functional RING-type zinc finger.

The protein localises to the nucleus. The protein resides in the cytoplasm. It localises to the midbody. It is found in the chromosome. Its subcellular location is the telomere. The enzyme catalyses S-ubiquitinyl-[E2 ubiquitin-conjugating enzyme]-L-cysteine + [acceptor protein]-L-lysine = [E2 ubiquitin-conjugating enzyme]-L-cysteine + N(6)-ubiquitinyl-[acceptor protein]-L-lysine.. Its pathway is protein modification; protein ubiquitination. In terms of biological role, E3 ubiquitin-protein ligase that plays a key role in DNA damage signaling via 2 distinct roles: by mediating the 'Lys-63'-linked ubiquitination of histones H2A and H2AX and promoting the recruitment of DNA repair proteins at double-strand breaks (DSBs) sites, and by catalyzing 'Lys-48'-linked ubiquitination to remove target proteins from DNA damage sites. Following DNA DSBs, it is recruited to the sites of damage by ATM-phosphorylated MDC1 and catalyzes the 'Lys-63'-linked ubiquitination of histones H2A and H2AX, thereby promoting the formation of TP53BP1 and BRCA1 ionizing radiation-induced foci (IRIF). Also controls the recruitment of UIMC1-BRCC3 (RAP80-BRCC36) and PAXIP1/PTIP to DNA damage sites. Promotes the recruitment of NBN to DNA damage sites by catalyzing 'Lys-6'-linked ubiquitination of NBN. Also recruited at DNA interstrand cross-links (ICLs) sites and catalyzes 'Lys-63'-linked ubiquitination of histones H2A and H2AX, leading to recruitment of FAAP20 and Fanconi anemia (FA) complex, followed by interstrand cross-link repair. H2A ubiquitination also mediates the ATM-dependent transcriptional silencing at regions flanking DSBs in cis, a mechanism to avoid collision between transcription and repair intermediates. Promotes the formation of 'Lys-63'-linked polyubiquitin chains via interactions with the specific ubiquitin-conjugating UBE2N/UBC13 and ubiquitinates non-histone substrates such as PCNA. Substrates that are polyubiquitinated at 'Lys-63' are usually not targeted for degradation. Also catalyzes the formation of 'Lys-48'-linked polyubiquitin chains via interaction with the ubiquitin-conjugating UBE2L6/UBCH8, leading to degradation of substrate proteins such as CHEK2, JMJD2A/KDM4A and KU80/XRCC5: it is still unclear how the preference toward 'Lys-48'- versus 'Lys-63'-linked ubiquitination is regulated but it could be due to RNF8 ability to interact with specific E2 specific ligases. For instance, interaction with phosphorylated HERC2 promotes the association between RNF8 and UBE2N/UBC13 and favors the specific formation of 'Lys-63'-linked ubiquitin chains. Promotes non-homologous end joining (NHEJ) by promoting the 'Lys-48'-linked ubiquitination and degradation the of KU80/XRCC5. Following DNA damage, mediates the ubiquitination and degradation of JMJD2A/KDM4A in collaboration with RNF168, leading to unmask H4K20me2 mark and promote the recruitment of TP53BP1 at DNA damage sites. Following DNA damage, mediates the ubiquitination and degradation of POLD4/p12, a subunit of DNA polymerase delta. In the absence of POLD4, DNA polymerase delta complex exhibits higher proofreading activity. In addition to its function in damage signaling, also plays a role in higher-order chromatin structure by mediating extensive chromatin decondensation. Involved in the activation of ATM by promoting histone H2B ubiquitination, which indirectly triggers histone H4 'Lys-16' acetylation (H4K16ac), establishing a chromatin environment that promotes efficient activation of ATM kinase. Required in the testis, where it plays a role in the replacement of histones during spermatogenesis. At uncapped telomeres, promotes the joining of deprotected chromosome ends by inducing H2A ubiquitination and TP53BP1 recruitment, suggesting that it may enhance cancer development by aggravating telomere-induced genome instability in case of telomeric crisis. Promotes the assembly of RAD51 at DNA DSBs in the absence of BRCA1 and TP53BP1 Also involved in class switch recombination in immune system, via its role in regulation of DSBs repair. May be required for proper exit from mitosis after spindle checkpoint activation and may regulate cytokinesis. May play a role in the regulation of RXRA-mediated transcriptional activity. Not involved in RXRA ubiquitination by UBE2E2. The protein is E3 ubiquitin-protein ligase RNF8 of Pongo abelii (Sumatran orangutan).